The following is a 201-amino-acid chain: Prostamide/prostaglandin F synthase (201 aa).

This sequence belongs to the peroxiredoxin-like PRXL2 family. Prostamide/prostaglandin F synthase subfamily.

The protein localises to the cytoplasm. The protein resides in the cytosol. It catalyses the reaction prostaglandin H2 + [thioredoxin]-dithiol = prostaglandin F2alpha + [thioredoxin]-disulfide. The catalysed reaction is prostamide F2alpha + [thioredoxin]-disulfide = prostamide H2 + [thioredoxin]-dithiol. Catalyzes the reduction of prostaglandin-ethanolamide H(2) (prostamide H(2)) to prostamide F(2alpha) with NADPH as proton donor. Also able to reduce prostaglandin H(2) to prostaglandin F(2alpha). This is Prostamide/prostaglandin F synthase (prxl2b) from Aquarana catesbeiana (American bullfrog).